A 226-amino-acid polypeptide reads, in one-letter code: Respiratory nitrate reductase 2 gamma chain (226 aa).

Residues Met-1 to Tyr-4 are Periplasmic-facing. Residues Leu-5–Asp-30 form a helical membrane-spanning segment. Over Tyr-31–Gly-48 the chain is Cytoplasmic. The chain crosses the membrane as a helical span at residues Met-49–Met-71. Residues His-57 and His-67 each coordinate heme b. Residues Leu-72–Pro-83 lie on the Periplasmic side of the membrane. A helical transmembrane segment spans residues Val-84–Arg-113. Residues Leu-114–Thr-125 are Cytoplasmic-facing. Residues Pro-126–Ala-149 form a helical membrane-spanning segment. At Gln-150–Phe-183 the chain is on the periplasmic side. Residues Val-184 to Phe-199 traverse the membrane as a helical segment. 2 residues coordinate heme b: His-188 and His-206. The Cytoplasmic portion of the chain corresponds to Pro-200–Arg-226.

Dimer of heterotrimers each composed of an alpha, a beta and a gamma chain. Alpha and beta are catalytic chains; gamma chains are involved in binding the enzyme complex to the cytoplasmic membrane. It depends on heme as a cofactor.

The protein resides in the cell inner membrane. It catalyses the reaction nitrate + a quinol = a quinone + nitrite + H2O. Functionally, this is a second nitrate reductase enzyme which can substitute for the NRA enzyme and allows E.coli to use nitrate as an electron acceptor during anaerobic growth. The gamma chain is a membrane-embedded heme-iron unit resembling cytochrome b, which transfers electrons from quinones to the beta subunit. The protein is Respiratory nitrate reductase 2 gamma chain (narV) of Escherichia coli (strain K12).